The following is a 376-amino-acid chain: Mitogen-activated protein kinase ERK-A (376 aa).

In terms of domain architecture, Protein kinase spans 38–326; the sequence is YIKLAYIGEG…VEEALAHPYL (289 aa). Residues 44–52 and Lys-67 contribute to the ATP site; that span reads IGEGAYGMV. Asp-162 (proton acceptor) is an active-site residue. Thr-198 bears the Phosphothreonine mark. The short motif at 198–200 is the TXY element; the sequence is TEY. Tyr-200 carries the phosphotyrosine modification.

This sequence belongs to the protein kinase superfamily. CMGC Ser/Thr protein kinase family. MAP kinase subfamily. The cofactor is Mg(2+). In terms of processing, dually phosphorylated on Thr-198 and Tyr-200, which activates the enzyme. Phosphorylated on tyrosine residue(s) in response to insulin. As to expression, in third instar larvae, expressed in eye imaginal disks. In adults, expressed in head and body.

It localises to the cytoplasm. The protein localises to the nucleus. The catalysed reaction is L-seryl-[protein] + ATP = O-phospho-L-seryl-[protein] + ADP + H(+). It carries out the reaction L-threonyl-[protein] + ATP = O-phospho-L-threonyl-[protein] + ADP + H(+). Its activity is regulated as follows. Activated by tyrosine and threonine phosphorylation. Its function is as follows. Serine/threonine kinase which acts as an essential component of the MAP kinase signal transduction pathway to regulate proliferation, differentiation and effect cell fate decisions in various tissues. Required downstream of phl/Raf in the sev/sevenless, tor/torso, and EGF receptor homolog Egfr signal transduction pathways. Required for embryonic epithelial tissue repair. During larval development, mediates Ptth/tor signaling leading to the production of ecdysone, a hormone required for the initiation of metamorphosis. The sequence is that of Mitogen-activated protein kinase ERK-A from Drosophila melanogaster (Fruit fly).